Reading from the N-terminus, the 514-residue chain is Glucose-1-phosphate adenylyltransferase small subunit 2, chloroplastic/amyloplastic/cytosolic (514 aa).

The N-terminal 64 residues, 1 to 64 (MAMAAAMGVA…RRRPLVFSPR (64 aa)), are a transit peptide targeting the chloroplast. Residues 35–74 (RPRRPRGVASSSSSSSSAGRRRRPLVFSPRAVSDSKSSQT) are disordered. Residues 41–52 (GVASSSSSSSSA) show a composition bias toward low complexity.

Belongs to the bacterial/plant glucose-1-phosphate adenylyltransferase family. In terms of assembly, heterotetramer composed of two small and two large subunits. Expressed in leaves.

It localises to the plastid. The protein resides in the chloroplast. It is found in the amyloplast. The protein localises to the cytoplasm. Its subcellular location is the cytosol. The catalysed reaction is alpha-D-glucose 1-phosphate + ATP + H(+) = ADP-alpha-D-glucose + diphosphate. It functions in the pathway glycan biosynthesis; starch biosynthesis. Activated by 3'phosphoglycerate, inhibited by orthophosphate. Allosteric regulation. Inhibited by inorganic phosphate (Pi). Involved in synthesis of starch. Catalyzes the synthesis of ADP-glucose, a molecule that serves as an activated glycosyl donor for alpha-1,4-glucan synthesis. The chloroplastic isoform 1 is essential for starch synthesis in leaf chloroplasts and the cytosolic isoform 2 for synthesis in seed endosperm. The sequence is that of Glucose-1-phosphate adenylyltransferase small subunit 2, chloroplastic/amyloplastic/cytosolic from Oryza sativa subsp. japonica (Rice).